The primary structure comprises 45 residues: Gene 78 protein (45 aa).

Positions 1–14 are enriched in basic and acidic residues; the sequence is MKKMSDQLKARLEL. The segment at 1–45 is disordered; it reads MKKMSDQLKARLELRLSNAAQPHRNRKREMKRPGKGNRNNWKKEY. Residues 23–35 are compositionally biased toward basic residues; it reads HRNRKREMKRPGK.

The chain is Gene 78 protein (78) from Mycobacterium phage L5 (Mycobacteriophage L5).